Here is a 352-residue protein sequence, read N- to C-terminus: MEYRKIKDEDDHDVASDIESVKGKSHTVASSNIAMATLGVGSSERINWKRKGVVTCALTILTSSQAILIVWSKRAGKYEYSVTTANFLVGTLKCALSLLALTRIWKNEGVTDDNRLSTTFDEVKVFPIPAALYLFKNLLQYYIFAYVDAPGYQILKNLNIISTGVLYRIILKRKLSEIQWAGFILLCCGCTTAQLNSNSDRVLQTSLPGWTMAIVMALLSGFAGVYTEAIIKKRPSRNINVQNFWLYVFGMAFNAVAIVIQDFDAVANKGFFHGYSFITLLMILNHALSGIAVSMVMKYADNIVKVYSTSVAMLLTAVVSVFLFNFHLSLAFFLGSTVVSVSVYLHSAGKLR.

The Cytoplasmic portion of the chain corresponds to Met1–Lys51. Residues Gly52 to Ser72 form a helical membrane-spanning segment. The Lumenal segment spans residues Lys73–Ser81. A helical transmembrane segment spans residues Val82 to Thr102. The Cytoplasmic portion of the chain corresponds to Arg103–Lys124. The helical transmembrane segment at Val125–Ala145 threads the bilayer. The Lumenal segment spans residues Tyr146–Lys174. A helical transmembrane segment spans residues Leu175–Leu195. Residues Asn196 to Trp210 lie on the Cytoplasmic side of the membrane. The helical transmembrane segment at Thr211–Ile231 threads the bilayer. Residues Lys232–Asn238 lie on the Lumenal side of the membrane. The chain crosses the membrane as a helical span at residues Ile239–Val259. Topologically, residues Ile260 to Ser276 are cytoplasmic. A helical membrane pass occupies residues Phe277–Met297. Over Lys298–Met313 the chain is Lumenal. Residues Leu314–Leu334 traverse the membrane as a helical segment. Topologically, residues Gly335–Arg352 are cytoplasmic.

This sequence belongs to the nucleotide-sugar transporter family. CMP-Sialate:CMP antiporter (TC 2.A.7.12) subfamily.

The protein localises to the golgi apparatus membrane. Its function is as follows. Sugar transporter involved in the transport of CMP-sialic acid from the cytoplasm into the Golgi. Essential protein. This is CMP-sialic acid transporter 4 from Arabidopsis thaliana (Mouse-ear cress).